A 189-amino-acid polypeptide reads, in one-letter code: Probable nicotinate-nucleotide adenylyltransferase (189 aa).

The protein belongs to the NadD family.

It catalyses the reaction nicotinate beta-D-ribonucleotide + ATP + H(+) = deamido-NAD(+) + diphosphate. It functions in the pathway cofactor biosynthesis; NAD(+) biosynthesis; deamido-NAD(+) from nicotinate D-ribonucleotide: step 1/1. In terms of biological role, catalyzes the reversible adenylation of nicotinate mononucleotide (NaMN) to nicotinic acid adenine dinucleotide (NaAD). The chain is Probable nicotinate-nucleotide adenylyltransferase from Bacillus cereus (strain Q1).